A 179-amino-acid chain; its full sequence is Large ribosomal subunit protein uL5 (179 aa).

It belongs to the universal ribosomal protein uL5 family. Part of the 50S ribosomal subunit; part of the 5S rRNA/L5/L18/L25 subcomplex. Contacts the 5S rRNA and the P site tRNA. Forms a bridge to the 30S subunit in the 70S ribosome.

Its function is as follows. This is one of the proteins that bind and probably mediate the attachment of the 5S RNA into the large ribosomal subunit, where it forms part of the central protuberance. In the 70S ribosome it contacts protein S13 of the 30S subunit (bridge B1b), connecting the 2 subunits; this bridge is implicated in subunit movement. Contacts the P site tRNA; the 5S rRNA and some of its associated proteins might help stabilize positioning of ribosome-bound tRNAs. This is Large ribosomal subunit protein uL5 from Aliivibrio salmonicida (strain LFI1238) (Vibrio salmonicida (strain LFI1238)).